The primary structure comprises 280 residues: 4-diphosphocytidyl-2-C-methyl-D-erythritol kinase (280 aa).

Lys-9 is an active-site residue. ATP is bound at residue 92–102 (PMGGGLGGGSS). The active site involves Asp-134.

Belongs to the GHMP kinase family. IspE subfamily.

It catalyses the reaction 4-CDP-2-C-methyl-D-erythritol + ATP = 4-CDP-2-C-methyl-D-erythritol 2-phosphate + ADP + H(+). It functions in the pathway isoprenoid biosynthesis; isopentenyl diphosphate biosynthesis via DXP pathway; isopentenyl diphosphate from 1-deoxy-D-xylulose 5-phosphate: step 3/6. Its function is as follows. Catalyzes the phosphorylation of the position 2 hydroxy group of 4-diphosphocytidyl-2C-methyl-D-erythritol. This Nitrosococcus oceani (strain ATCC 19707 / BCRC 17464 / JCM 30415 / NCIMB 11848 / C-107) protein is 4-diphosphocytidyl-2-C-methyl-D-erythritol kinase.